Reading from the N-terminus, the 491-residue chain is Cytochrome P450 2F5 (491 aa).

A heme-binding site is contributed by Cys-436.

This sequence belongs to the cytochrome P450 family. It depends on heme as a cofactor.

The protein resides in the endoplasmic reticulum membrane. It is found in the microsome membrane. It carries out the reaction an organic molecule + reduced [NADPH--hemoprotein reductase] + O2 = an alcohol + oxidized [NADPH--hemoprotein reductase] + H2O + H(+). In terms of biological role, cytochromes P450 are a group of heme-thiolate monooxygenases. In liver microsomes, this enzyme is involved in an NADPH-dependent electron transport pathway. It oxidizes a variety of structurally unrelated compounds, including steroids, fatty acids, and xenobiotics. The polypeptide is Cytochrome P450 2F5 (CYP2F5) (Gorilla gorilla gorilla (Western lowland gorilla)).